The chain runs to 312 residues: Lipoyl synthase (312 aa).

A compositionally biased stretch (basic and acidic residues) spans 1-10 (MNEAPAEKQK). Residues 1–20 (MNEAPAEKQKPQQGKRFSER) are disordered. The [4Fe-4S] cluster site is built by Cys51, Cys56, Cys62, Cys77, Cys81, Cys84, and Ser290. The Radical SAM core domain maps to 63–280 (WSRKTATYLA…RSVGESLGLF (218 aa)).

The protein belongs to the radical SAM superfamily. Lipoyl synthase family. The cofactor is [4Fe-4S] cluster.

It localises to the cytoplasm. It carries out the reaction [[Fe-S] cluster scaffold protein carrying a second [4Fe-4S](2+) cluster] + N(6)-octanoyl-L-lysyl-[protein] + 2 oxidized [2Fe-2S]-[ferredoxin] + 2 S-adenosyl-L-methionine + 4 H(+) = [[Fe-S] cluster scaffold protein] + N(6)-[(R)-dihydrolipoyl]-L-lysyl-[protein] + 4 Fe(3+) + 2 hydrogen sulfide + 2 5'-deoxyadenosine + 2 L-methionine + 2 reduced [2Fe-2S]-[ferredoxin]. It participates in protein modification; protein lipoylation via endogenous pathway; protein N(6)-(lipoyl)lysine from octanoyl-[acyl-carrier-protein]: step 2/2. In terms of biological role, catalyzes the radical-mediated insertion of two sulfur atoms into the C-6 and C-8 positions of the octanoyl moiety bound to the lipoyl domains of lipoate-dependent enzymes, thereby converting the octanoylated domains into lipoylated derivatives. This is Lipoyl synthase from Chlamydia felis (strain Fe/C-56) (Chlamydophila felis).